The chain runs to 151 residues: UPF0208 membrane protein ECA3038 (151 aa).

The next 2 helical transmembrane spans lie at 46–66 (FGIR…IALG) and 69–89 (LGPA…GLWW).

The protein belongs to the UPF0208 family.

The protein localises to the cell inner membrane. This is UPF0208 membrane protein ECA3038 from Pectobacterium atrosepticum (strain SCRI 1043 / ATCC BAA-672) (Erwinia carotovora subsp. atroseptica).